Here is a 402-residue protein sequence, read N- to C-terminus: uncharacterized protein (402 aa).

11 consecutive transmembrane segments (helical) span residues 12 to 32 (FWLITGIIFIAFNLRPAITSV), 48 to 68 (GAAGFLTALPLLSFAVLSPLA), 80 to 100 (TLWLGLVILLIGVLTRSTGYT), 101 to 121 (AALFFGTALIGVGIAIGNVLL), 134 to 154 (GIMISLYTTSMNIFAALASGV), 168 to 188 (QAFLLWGGLALLALLIWIPQL), 212 to 232 (WYVTIFMGLQSFLFYSSIAWF), 248 to 268 (WMVSLMQFASLPSTFLTPVLA), 291 to 311 (GLLAGGSHTLLAIWMIIIGIG), 339 to 359 (MSQSFGYLLAAVGPIFVGYLF), and 367 to 387 (MPIVLLIAALIVMGAAGQGAG).

It belongs to the major facilitator superfamily. Cyanate porter (TC 2.A.1.17) family.

It is found in the cell membrane. This is an uncharacterized protein from Bacillus subtilis (strain 168).